Here is a 34-residue protein sequence, read N- to C-terminus: Mu-theraphotoxin-Df1a (34 aa).

3 disulfide bridges follow: Cys-2-Cys-16, Cys-9-Cys-21, and Cys-15-Cys-28. Residue Phe-34 is modified to Phenylalanine amide.

This sequence belongs to the neurotoxin 10 (Hwtx-1) family. 54 (ProTx-1) subfamily. C-terminal amidation is important for the high potency of the toxin. Expressed by the venom gland.

The protein resides in the secreted. In terms of biological role, inhibits sodium channel Nav1.7/SCN9A with high potency (IC(50)=117 nM) and Nav1.2/SCN2A, Nav1.3/SCN3A, Nav1.6/SCN8A and Nav1.5/SCN5 with weaker potency. Also inhibits voltage-gated calcium channel Cav3.1/CACNA1G, Cav3.2/CACNA1H and Cav3.3/CACNA1I. This is Mu-theraphotoxin-Df1a from Davus fasciatus (Costa Rican tiger rump).